The following is a 184-amino-acid chain: Shikimate kinase (184 aa).

17–22 serves as a coordination point for ATP; sequence SVGKTS. Position 21 (threonine 21) interacts with Mg(2+). Residues aspartate 39 and glycine 85 each coordinate substrate.

This sequence belongs to the shikimate kinase family. In terms of assembly, monomer. Requires Mg(2+) as cofactor.

It is found in the cytoplasm. It catalyses the reaction shikimate + ATP = 3-phosphoshikimate + ADP + H(+). The protein operates within metabolic intermediate biosynthesis; chorismate biosynthesis; chorismate from D-erythrose 4-phosphate and phosphoenolpyruvate: step 5/7. Functionally, catalyzes the specific phosphorylation of the 3-hydroxyl group of shikimic acid using ATP as a cosubstrate. This Chlamydia muridarum (strain MoPn / Nigg) protein is Shikimate kinase.